Reading from the N-terminus, the 280-residue chain is Dihydropteroate synthase (280 aa).

One can recognise a Pterin-binding domain in the interval 1–265 (MSPAPVQVMG…DVRASVDAIK (265 aa)). Residue Asn-13 coordinates Mg(2+). (7,8-dihydropterin-6-yl)methyl diphosphate contacts are provided by residues Asp-86, Asn-105, Asp-177, Lys-213, and 253–255 (RVH).

The protein belongs to the DHPS family. In terms of assembly, homodimer. Requires Mg(2+) as cofactor.

It carries out the reaction (7,8-dihydropterin-6-yl)methyl diphosphate + 4-aminobenzoate = 7,8-dihydropteroate + diphosphate. The protein operates within cofactor biosynthesis; tetrahydrofolate biosynthesis; 7,8-dihydrofolate from 2-amino-4-hydroxy-6-hydroxymethyl-7,8-dihydropteridine diphosphate and 4-aminobenzoate: step 1/2. In terms of biological role, catalyzes the condensation of para-aminobenzoate (pABA) with 6-hydroxymethyl-7,8-dihydropterin diphosphate (DHPt-PP) to form 7,8-dihydropteroate (H2Pte), the immediate precursor of folate derivatives. This Mycobacterium bovis (strain ATCC BAA-935 / AF2122/97) protein is Dihydropteroate synthase (folP1).